We begin with the raw amino-acid sequence, 129 residues long: Small ribosomal subunit protein uS11 (129 aa).

It belongs to the universal ribosomal protein uS11 family. As to quaternary structure, part of the 30S ribosomal subunit. Interacts with proteins S7 and S18. Binds to IF-3.

Functionally, located on the platform of the 30S subunit, it bridges several disparate RNA helices of the 16S rRNA. Forms part of the Shine-Dalgarno cleft in the 70S ribosome. The protein is Small ribosomal subunit protein uS11 of Macrococcus caseolyticus (strain JCSC5402) (Macrococcoides caseolyticum).